Here is a 248-residue protein sequence, read N- to C-terminus: Probable transcriptional regulatory protein Bind_0345 (248 aa).

This sequence belongs to the TACO1 family.

The protein localises to the cytoplasm. This Beijerinckia indica subsp. indica (strain ATCC 9039 / DSM 1715 / NCIMB 8712) protein is Probable transcriptional regulatory protein Bind_0345.